The sequence spans 258 residues: Type II restriction enzyme HincII (258 aa).

The enzyme catalyses Endonucleolytic cleavage of DNA to give specific double-stranded fragments with terminal 5'-phosphates.. Its function is as follows. A P subtype restriction enzyme that recognizes the double-stranded sequence 5'-GTYRAC-3' and cleaves after Y-3. This Haemophilus influenzae protein is Type II restriction enzyme HincII (hincIIR).